Reading from the N-terminus, the 217-residue chain is Adenylate kinase (217 aa).

Gly10–Thr15 lines the ATP pocket. The NMP stretch occupies residues Ser30–Val59. Residues Thr31, Arg36, Glu57–Val59, Gly85–Arg88, and Gln92 each bind AMP. The interval Gly126–Asp163 is LID. Arg127 serves as a coordination point for ATP. Positions 130 and 133 each coordinate Zn(2+). Thr136–Tyr137 serves as a coordination point for ATP. Zn(2+)-binding residues include Cys150 and Cys153. The AMP site is built by Arg160 and Arg171. Lys199 lines the ATP pocket.

It belongs to the adenylate kinase family. As to quaternary structure, monomer.

It is found in the cytoplasm. It catalyses the reaction AMP + ATP = 2 ADP. The protein operates within purine metabolism; AMP biosynthesis via salvage pathway; AMP from ADP: step 1/1. In terms of biological role, catalyzes the reversible transfer of the terminal phosphate group between ATP and AMP. Plays an important role in cellular energy homeostasis and in adenine nucleotide metabolism. The protein is Adenylate kinase of Bacillus licheniformis (strain ATCC 14580 / DSM 13 / JCM 2505 / CCUG 7422 / NBRC 12200 / NCIMB 9375 / NCTC 10341 / NRRL NRS-1264 / Gibson 46).